We begin with the raw amino-acid sequence, 312 residues long: Bark storage protein A (312 aa).

A signal peptide spans methionine 1–isoleucine 24. An N-linked (GlcNAc...) asparagine glycan is attached at asparagine 70.

It to wound-inducible poplar endochitinases. Monomer. As to expression, bark.

May play a role in nitrogen storage. In Populus deltoides (Eastern poplar), this protein is Bark storage protein A (BSPA).